The primary structure comprises 359 residues: GTP 3',8-cyclase 1 (359 aa).

The Radical SAM core domain maps to 21–241 (RCRRMMGDLR…SLEKRYGRIE (221 aa)). R30 contributes to the GTP binding site. [4Fe-4S] cluster-binding residues include C37 and C41. Y43 is a binding site for S-adenosyl-L-methionine. C44 lines the [4Fe-4S] cluster pocket. Residue R80 participates in GTP binding. G84 is a binding site for S-adenosyl-L-methionine. T115 provides a ligand contact to GTP. S139 contributes to the S-adenosyl-L-methionine binding site. K176 lines the GTP pocket. M210 provides a ligand contact to S-adenosyl-L-methionine. Residues C273 and C276 each coordinate [4Fe-4S] cluster. A GTP-binding site is contributed by 278–280 (RSR). A [4Fe-4S] cluster-binding site is contributed by C290.

Belongs to the radical SAM superfamily. MoaA family. Monomer and homodimer. Requires [4Fe-4S] cluster as cofactor.

It carries out the reaction GTP + AH2 + S-adenosyl-L-methionine = (8S)-3',8-cyclo-7,8-dihydroguanosine 5'-triphosphate + 5'-deoxyadenosine + L-methionine + A + H(+). It participates in cofactor biosynthesis; molybdopterin biosynthesis. In terms of biological role, catalyzes the cyclization of GTP to (8S)-3',8-cyclo-7,8-dihydroguanosine 5'-triphosphate. The protein is GTP 3',8-cyclase 1 of Mycobacterium tuberculosis (strain CDC 1551 / Oshkosh).